A 290-amino-acid chain; its full sequence is Ribosomal RNA small subunit methyltransferase A (290 aa).

The S-adenosyl-L-methionine site is built by H37, V39, G64, E85, D115, and N132.

It belongs to the class I-like SAM-binding methyltransferase superfamily. rRNA adenine N(6)-methyltransferase family. RsmA subfamily.

Its subcellular location is the cytoplasm. It carries out the reaction adenosine(1518)/adenosine(1519) in 16S rRNA + 4 S-adenosyl-L-methionine = N(6)-dimethyladenosine(1518)/N(6)-dimethyladenosine(1519) in 16S rRNA + 4 S-adenosyl-L-homocysteine + 4 H(+). Specifically dimethylates two adjacent adenosines (A1518 and A1519) in the loop of a conserved hairpin near the 3'-end of 16S rRNA in the 30S particle. May play a critical role in biogenesis of 30S subunits. The protein is Ribosomal RNA small subunit methyltransferase A of Acidothermus cellulolyticus (strain ATCC 43068 / DSM 8971 / 11B).